Reading from the N-terminus, the 203-residue chain is Signal peptidase I (203 aa).

A disordered region spans residues 1-26 (MSSESDSPTPQTPPAQPAASQPKADS). The Cytoplasmic portion of the chain corresponds to 1–33 (MSSESDSPTPQTPPAQPAASQPKADSPLMEGIK). Residues 17–26 (PAASQPKADS) show a composition bias toward low complexity. Residues 34–50 (TIGLSVVLALGIRTFVA) form a helical membrane-spanning segment. Over 51–203 (EARYIPSESM…LGELGPPPSY (153 aa)) the chain is Extracellular. Active-site residues include Ser59 and Lys109.

This sequence belongs to the peptidase S26 family.

It localises to the cell membrane. The catalysed reaction is Cleavage of hydrophobic, N-terminal signal or leader sequences from secreted and periplasmic proteins.. This is Signal peptidase I (lepB) from Leptolyngbya laminosa (Phormidium laminosum).